Reading from the N-terminus, the 3948-residue chain is Hybrid PKS-NRPS synthetase fsa1 (3948 aa).

The 435-residue stretch at 4 to 438 (SEPIAVIGSA…GTNAHAIIEA (435 aa)) folds into the Ketosynthase family 3 (KS3) domain. Catalysis depends on for beta-ketoacyl synthase activity residues Cys177, His316, and His358. The tract at residues 543–846 (IFTGQGTQWP…LDTIEAISEG (304 aa)) is malonyl-CoA:ACP transacylase (MAT) domain. An N-terminal hotdog fold region spans residues 931 to 1066 (HPLLGRRCHD…AQIKASLGTP (136 aa)). The tract at residues 931 to 1233 (HPLLGRRCHD…MELVPFSPAT (303 aa)) is dehydratase (DH) domain. In terms of domain architecture, PKS/mFAS DH spans 931–1235 (HPLLGRRCHD…LVPFSPATPA (305 aa)). His964 acts as the Proton acceptor; for dehydratase activity in catalysis. Residues 1081–1235 (LRPVSVDRFY…LVPFSPATPA (155 aa)) are C-terminal hotdog fold. Asp1141 serves as the catalytic Proton donor; for dehydratase activity. The segment at 1381 to 1578 (YEQGFGLNLV…TTPPVHKILP (198 aa)) is methyltransferase (MT) domain. The tract at residues 2105-2277 (TFLLIGLTGE…VAASSIDISS (173 aa)) is ketoreductase (KR) domain. The 76-residue stretch at 2389–2464 (AIIKESFIVR…DLVDESLDLL (76 aa)) folds into the Carrier 1 domain. Ser2424 carries the O-(pantetheine 4'-phosphoryl)serine modification. The disordered stretch occupies residues 2475-2555 (EAGNAHPAKP…TDNLTPPRTF (81 aa)). Composition is skewed to polar residues over residues 2487–2505 (VIPQ…QGTS) and 2513–2528 (GSDS…LTSW). The segment covering 2529 to 2541 (DRQDLSPPDKSDD) has biased composition (basic and acidic residues). Residues 2542–2551 (APNSTDNLTP) show a composition bias toward polar residues. The condensation (C) domain stretch occupies residues 2547–2976 (DNLTPPRTFP…TQVLLRSYLS (430 aa)). Positions 3000-3402 (LKVAVDAGKA…PDTFFGTSGT (403 aa)) are adenylation (A) (KR) domain. The 78-residue stretch at 3540–3617 (KSLTASEKRL…AMASVLEDCG (78 aa)) folds into the Carrier 2 domain. An O-(pantetheine 4'-phosphoryl)serine modification is found at Ser3577. Positions 3653-3870 (LTGSSGYLGR…MPVNEIVEAI (218 aa)) are reductase (RED) domain.

This sequence in the C-terminal section; belongs to the NRP synthetase family.

It catalyses the reaction L-serine + 7 malonyl-CoA + acetyl-CoA + 2 S-adenosyl-L-methionine + ATP + 8 NADPH + 11 H(+) = (5S)-3-[(2E,6R,8E,10E,12E)-2,6-dimethyltetradeca-2,8,10,12-tetraenoyl]-5-(hydroxymethyl)pyrrolidine-2,4-dione + AMP + 2 S-adenosyl-L-homocysteine + 7 CO2 + diphosphate + 8 NADP(+) + 8 CoA + 6 H2O. Its pathway is mycotoxin biosynthesis. In terms of biological role, hybrid PKS-NRPS synthetase; part of the gene cluster that mediates the biosynthesis of HIV-1 integrase inhibitor equisetin and of fusarisetin A, both trans-fused decalin-containing tetramic acids showing also antimicrobial activity. The PKS module of fsa1 together with the enoylreductase fsa3 catalyze the formation of the polyketide unit which is then conjugated to L-serine by the condensation domain of the fsa1 NRPS module. Activity of the Dieckmann cyclase domain (RED) results in release of the Dieckmann product intermediate. Diels-Alderase fsa2 is involved in endo-selective Diels-Alder cycloaddition to form the decalin ring, leading to the production of N-desmethylequisetin also called trichosetin. Subsequent N-methylation is carried out by fsa4 to give equisetin. The enzymatic gene responsible for the conversion of equisetin to fusarisetin A has not been identified yet and is probably located outside of the fsa cluster. This is Hybrid PKS-NRPS synthetase fsa1 from Fusarium sp. (strain FN080326).